Consider the following 194-residue polypeptide: Methylated-DNA--protein-cysteine methyltransferase (194 aa).

2 residues coordinate DNA: Tyr125 and Arg139. Cys156 acts as the Nucleophile; methyl group acceptor in catalysis. Residue Ser162 coordinates DNA.

The protein belongs to the MGMT family.

Its subcellular location is the nucleus. The enzyme catalyses a 6-O-methyl-2'-deoxyguanosine in DNA + L-cysteinyl-[protein] = S-methyl-L-cysteinyl-[protein] + a 2'-deoxyguanosine in DNA. It catalyses the reaction a 4-O-methyl-thymidine in DNA + L-cysteinyl-[protein] = a thymidine in DNA + S-methyl-L-cysteinyl-[protein]. Its function is as follows. Involved in the cellular defense against the biological effects of O6-methylguanine (O6-MeG) and O4-methylthymine (O4-MeT) in DNA. Repairs the methylated nucleobase in DNA by stoichiometrically transferring the methyl group to a cysteine residue in the enzyme. This is a suicide reaction: the enzyme is irreversibly inactivated. The chain is Methylated-DNA--protein-cysteine methyltransferase (MGT1) from Scheffersomyces stipitis (strain ATCC 58785 / CBS 6054 / NBRC 10063 / NRRL Y-11545) (Yeast).